The following is a 502-amino-acid chain: 4,4'-diaponeurosporene oxygenase (502 aa).

Residue 8–20 (IIGGGLGGISAAI) coordinates FAD.

It belongs to the carotenoid/retinoid oxidoreductase family. CrtP subfamily. The cofactor is FAD.

It catalyses the reaction all-trans-4,4'-diaponeurosporene + 2 AH2 + 2 O2 = 4,4'-diaponeurosporenal + 2 A + 3 H2O. It participates in carotenoid biosynthesis; staphyloxanthin biosynthesis; staphyloxanthin from farnesyl diphosphate: step 3/5. Its function is as follows. Involved in the biosynthesis of the yellow-orange carotenoid staphyloxanthin, which plays a role in the virulence via its protective function against oxidative stress. Catalyzes the oxidation of the terminal methyl side group of 4,4'-diaponeurosporene to form 4,4'-diaponeurosporen-4-al. The polypeptide is 4,4'-diaponeurosporene oxygenase (Staphylococcus haemolyticus (strain JCSC1435)).